We begin with the raw amino-acid sequence, 276 residues long: Putative metal-binding protein TC_0696 (276 aa).

The signal sequence occupies residues 1–18 (MRLLILLLFSFGIIYSHG). Residues histidine 59, histidine 121, histidine 185, and aspartate 256 each contribute to the a divalent metal cation site.

This sequence belongs to the bacterial solute-binding protein 9 family.

Its subcellular location is the periplasm. In terms of biological role, part of an ATP-binding cassette (ABC) transport system involved in metal import. Binds a metal with high affinity and specificity and delivers it to the membrane permease for translocation into the cytoplasm. The protein is Putative metal-binding protein TC_0696 of Chlamydia muridarum (strain MoPn / Nigg).